Here is a 377-residue protein sequence, read N- to C-terminus: tRNA 2-selenouridine synthase (377 aa).

A Rhodanese domain is found at isoleucine 18–aspartate 141. Catalysis depends on cysteine 101, which acts as the S-selanylcysteine intermediate.

It belongs to the SelU family. In terms of assembly, monomer.

The catalysed reaction is 5-methylaminomethyl-2-thiouridine(34) in tRNA + selenophosphate + (2E)-geranyl diphosphate + H2O + H(+) = 5-methylaminomethyl-2-selenouridine(34) in tRNA + (2E)-thiogeraniol + phosphate + diphosphate. The enzyme catalyses 5-methylaminomethyl-2-thiouridine(34) in tRNA + (2E)-geranyl diphosphate = 5-methylaminomethyl-S-(2E)-geranyl-thiouridine(34) in tRNA + diphosphate. It catalyses the reaction 5-methylaminomethyl-S-(2E)-geranyl-thiouridine(34) in tRNA + selenophosphate + H(+) = 5-methylaminomethyl-2-(Se-phospho)selenouridine(34) in tRNA + (2E)-thiogeraniol. It carries out the reaction 5-methylaminomethyl-2-(Se-phospho)selenouridine(34) in tRNA + H2O = 5-methylaminomethyl-2-selenouridine(34) in tRNA + phosphate. In terms of biological role, involved in the post-transcriptional modification of the uridine at the wobble position (U34) of tRNA(Lys), tRNA(Glu) and tRNA(Gln). Catalyzes the conversion of 2-thiouridine (S2U-RNA) to 2-selenouridine (Se2U-RNA). Acts in a two-step process involving geranylation of 2-thiouridine (S2U) to S-geranyl-2-thiouridine (geS2U) and subsequent selenation of the latter derivative to 2-selenouridine (Se2U) in the tRNA chain. The polypeptide is tRNA 2-selenouridine synthase (Cronobacter sakazakii (strain ATCC BAA-894) (Enterobacter sakazakii)).